The chain runs to 444 residues: Glycerol-3-phosphate transporter (444 aa).

The Cytoplasmic segment spans residues 1 to 36 (MLNIFKPAPHIERLDDSKMDAAYKRLRLQVFIGIFI). A helical membrane pass occupies residues 37–57 (GYAGYYLLRKNFAFAIPYLQE). Residues 58-63 (QGFSKT) lie on the Extracellular side of the membrane. The helical transmembrane segment at 64-84 (ELGLVLAAVSIAYGFSKFIMG) threads the bilayer. Topologically, residues 85–93 (MVSDRCNPR) are cytoplasmic. A helical membrane pass occupies residues 94-112 (YFLATGLFLSAIVNILFVS). Residues 113–120 (MPWVTSSV) are Extracellular-facing. A helical transmembrane segment spans residues 121–141 (TIMFIFMFINGWFQGMGWPPC). Residues 142 to 160 (GRTMAHWFSISERGTKMSI) lie on the Cytoplasmic side of the membrane. The chain crosses the membrane as a helical span at residues 161–180 (WNVAHNIGGGILAPLVTLGI). Residues 181-189 (AMFVTWKSV) lie on the Extracellular side of the membrane. A helical transmembrane segment spans residues 190-207 (FFFPAIIAIIISFLIVLL). At 208–261 (VRDTPQSCGLPPIEEYRNDYPKHAFKNQEKELTTKEILFQYVLNNKFLWYIAFA) the chain is on the cytoplasmic side. The helical transmembrane segment at 262 to 282 (NVFVYFVRYGVVDWAPTYLTE) threads the bilayer. Residues 283–287 (AKGFS) lie on the Extracellular side of the membrane. The helical transmembrane segment at 288–308 (PEDSRWSYFLYEYAGIPGTIL) threads the bilayer. Topologically, residues 309 to 321 (CGWISDRFFKSRR) are cytoplasmic. Residues 322 to 341 (APAGVLFMAGVFIAVLVYWL) form a helical membrane-spanning segment. Over 342–346 (NPAGN) the chain is Extracellular. A helical membrane pass occupies residues 347 to 368 (PLVDNIALISIGFLIYGPVMLI). Residues 369-387 (GLQAIDLAPKKAAGTAAGL) lie on the Cytoplasmic side of the membrane. A helical membrane pass occupies residues 388–409 (TGFFGYIGGSAFANAIMGFVVD). At 410–414 (RFNWN) the chain is on the extracellular side. Residues 415-435 (GGFIMLISSCILAIVFLALTW) traverse the membrane as a helical segment. Over 436 to 444 (NTGKRAEHV) the chain is Cytoplasmic.

This sequence belongs to the major facilitator superfamily. Organophosphate:Pi antiporter (OPA) (TC 2.A.1.4) family.

It is found in the cell membrane. In terms of biological role, responsible for glycerol-3-phosphate uptake. This chain is Glycerol-3-phosphate transporter (glpT), found in Bacillus subtilis (strain 168).